A 619-amino-acid polypeptide reads, in one-letter code: Zinc finger protein 131 (619 aa).

Positions 34-98 (TDITLIVDGH…TYTAKLMIQG (65 aa)) constitute a BTB domain. Residues 137–148 (TGKNEAKKRKIA) carry the Nuclear localization signal 1 motif. At serine 231 the chain carries Phosphoserine. 3 C2H2-type zinc fingers span residues 261–283 (FHCEKCNRSFKLFYHFKEHMKSH), 288–311 (FKCEICNKRYLRESAWKQHLNCYH), and 328–350 (HICQYCDKQFDHFGHFKEHLRKH). Residues lysine 289 and lysine 295 each participate in a glycyl lysine isopeptide (Lys-Gly) (interchain with G-Cter in SUMO2) cross-link. The Nuclear localization signal 2 signature appears at 317-328 (VSKKQRTGKKIH). The C2H2-type 4; degenerate zinc finger occupies 356-381 (FECSNCHERFARNSTLKCHLTACQTG). C2H2-type zinc fingers lie at residues 392 to 414 (YECQVCNSVFNSWDQFKDHLVIH) and 420 to 443 (NHCTLCDLWFMQGNELRRHLSDAH). Basic and acidic residues-rich tracts occupy residues 574 to 587 (QEEREPNHADAAME) and 595 to 612 (LETKPSEYSQARKTENDR). A disordered region spans residues 574–619 (QEEREPNHADAAMEEHEDAEGLETKPSEYSQARKTENDRTSLPVLE). A Glycyl lysine isopeptide (Lys-Gly) (interchain with G-Cter in SUMO) cross-link involves residue lysine 598.

This sequence belongs to the krueppel C2H2-type zinc-finger protein family. Post-translationally, monosumoylated at Lys-598 by CBX4 and UHRF2. Sumoylation may potentiate ZNF131 inhibition of estrogen signaling. Sumoylation does not interfere with ubiquitination. In terms of processing, ubiquitinated. As to expression, ubiquitously expressed. Predominant expression is found in the developing central nervous system with strongest signals in the forebrain, midbrain, and hindbrain areas and in the neural tube.

It localises to the nucleus. Its function is as follows. May be involved in transcriptional regulation as a repressor of ESR1/ER-alpha signaling. Plays a role during development and organogenesis as well as in the function of the adult central nervous system. The sequence is that of Zinc finger protein 131 (Znf131) from Mus musculus (Mouse).